Here is a 336-residue protein sequence, read N- to C-terminus: HTH-type transcriptional regulator SyrM (336 aa).

In terms of domain architecture, HTH lysR-type spans 41-98 (IDLNLLVALEALLEYRNVTHAGQHIGRSQPAMSRALGRLRGLFNDDLLVRSSTGLIPT). The H-T-H motif DNA-binding region spans 58–77 (VTHAGQHIGRSQPAMSRALG).

It belongs to the LysR transcriptional regulatory family.

Its function is as follows. Acts in trans to stimulate nod gene expression via nodD3 and exo gene expression via SyrA. This is HTH-type transcriptional regulator SyrM (syrM) from Rhizobium etli.